A 55-amino-acid polypeptide reads, in one-letter code: Large ribosomal subunit protein bL33 (55 aa).

The protein belongs to the bacterial ribosomal protein bL33 family.

The protein is Large ribosomal subunit protein bL33 of Methylocella silvestris (strain DSM 15510 / CIP 108128 / LMG 27833 / NCIMB 13906 / BL2).